A 151-amino-acid polypeptide reads, in one-letter code: Large ribosomal subunit protein uL15 (151 aa).

The protein belongs to the universal ribosomal protein uL15 family. As to quaternary structure, part of the 50S ribosomal subunit.

In terms of biological role, binds to the 23S rRNA. This chain is Large ribosomal subunit protein uL15, found in Hyperthermus butylicus (strain DSM 5456 / JCM 9403 / PLM1-5).